Consider the following 254-residue polypeptide: 5'/3'-nucleotidase SurE (254 aa).

Residues Asp9, Asp10, Ser40, and Asn93 each contribute to the a divalent metal cation site.

It belongs to the SurE nucleotidase family. A divalent metal cation is required as a cofactor.

Its subcellular location is the cytoplasm. The enzyme catalyses a ribonucleoside 5'-phosphate + H2O = a ribonucleoside + phosphate. It carries out the reaction a ribonucleoside 3'-phosphate + H2O = a ribonucleoside + phosphate. The catalysed reaction is [phosphate](n) + H2O = [phosphate](n-1) + phosphate + H(+). Nucleotidase with a broad substrate specificity as it can dephosphorylate various ribo- and deoxyribonucleoside 5'-monophosphates and ribonucleoside 3'-monophosphates with highest affinity to 3'-AMP. Also hydrolyzes polyphosphate (exopolyphosphatase activity) with the preference for short-chain-length substrates (P20-25). Might be involved in the regulation of dNTP and NTP pools, and in the turnover of 3'-mononucleotides produced by numerous intracellular RNases (T1, T2, and F) during the degradation of various RNAs. This is 5'/3'-nucleotidase SurE from Proteus mirabilis (strain HI4320).